The chain runs to 132 residues: Small ribosomal subunit protein uS8 (132 aa).

Belongs to the universal ribosomal protein uS8 family. As to quaternary structure, part of the 30S ribosomal subunit. Contacts proteins S5 and S12.

Its function is as follows. One of the primary rRNA binding proteins, it binds directly to 16S rRNA central domain where it helps coordinate assembly of the platform of the 30S subunit. This Rhizobium etli (strain CIAT 652) protein is Small ribosomal subunit protein uS8.